An 841-amino-acid polypeptide reads, in one-letter code: Translation initiation factor IF-2 (841 aa).

Composition is skewed to basic and acidic residues over residues 1–12 (MSDNEIKNEAPK), 50–92 (EAAL…EATK), 114–170 (EQPK…REEA), 188–202 (READRDNDRRSEANR), and 213–235 (KKGDREDKNERNADRRNQKDVKG). Disordered stretches follow at residues 1–24 (MSDNEIKNEAPKKLSLQRRTKTTV) and 50–246 (EAAL…GSAL). A tr-type G domain is found at 340–510 (TRAPVVTIMG…LLQSEVLELT (171 aa)). Residues 349 to 356 (GHVDHGKT) form a G1 region. 349-356 (GHVDHGKT) is a binding site for GTP. The G2 stretch occupies residues 374–378 (GITQH). The interval 396–399 (DTPG) is G3. Residues 396 to 400 (DTPGH) and 450 to 453 (NKID) each bind GTP. Positions 450 to 453 (NKID) are G4. The G5 stretch occupies residues 486-488 (SAK).

The protein belongs to the TRAFAC class translation factor GTPase superfamily. Classic translation factor GTPase family. IF-2 subfamily.

Its subcellular location is the cytoplasm. Functionally, one of the essential components for the initiation of protein synthesis. Protects formylmethionyl-tRNA from spontaneous hydrolysis and promotes its binding to the 30S ribosomal subunits. Also involved in the hydrolysis of GTP during the formation of the 70S ribosomal complex. In Actinobacillus pleuropneumoniae serotype 3 (strain JL03), this protein is Translation initiation factor IF-2.